The chain runs to 578 residues: Acyl-CoA ligase AKT1 (578 aa).

ATP contacts are provided by residues 210 to 218 (SSGTSGAQK), 350 to 355 (QCYGAT), Asp-438, Arg-457, and Lys-554. The SBD1 stretch occupies residues 281–350 (DVEDLLSIVE…RHHPTWKTKQ (70 aa)). Residues 351–413 (CYGATEAGTA…VSSPSLAIGY (63 aa)) form an SBD2 region. A Peroxisomal targeting signal type 1 motif is present at residues 576–578 (SKI).

It is found in the peroxisome. Its pathway is mycotoxin biosynthesis. Acyl-CoA ligase; part of the gene clusters that mediate the biosynthesis of the host-selective toxins (HSTs) AK-toxins responsible for Japanese pear black spot disease by the Japanese pear pathotype. AK-toxins are esters of 9,10-epoxy 8-hydroxy 9-methyldecatrienoic acid (EDA). On cellular level, AK-toxins affect plasma membrane of susceptible cells and cause a sudden increase in loss of K(+) after a few minutes of toxin treatment. The acyl-CoA ligase AKT1, the hydrolase AKT2 and enoyl-CoA hydratase AKT3 are all involved in the biosynthesis of the AK-, AF- and ACT-toxin common 9,10-epoxy-8-hydroxy-9-methyl-decatrienoic acid (EDA) structural moiety. Part of the EDA biosynthesis occurs in the peroxisome since these 3 enzymes are localized in peroxisomes. The exact roles of the 3 enzymes, as well as of additional AK-toxin clusters enzymes, including AKT4, AKT6 and AKTS1, have still to be elucidated. The Cytochrome P450 monooxygenase AKT7 on the other side functions to limit production of EDA and AK-toxin, probably via the catalysis of a side reaction of EDA or its precursor. This is Acyl-CoA ligase AKT1 from Alternaria alternata (Alternaria rot fungus).